The primary structure comprises 492 residues: MTLWINGDWITGQGERRRKTNPVSAEIIWQGNDANAAQVAEACQAARAAFPRWARQPFAARQAIVEKFAALLEAHKAELTEVIARETGKPRWEAATEVTAMINKIAISIKAYHARTGEQKSELVDGAATLRHRPHGVLAVFGPYNFPGHLPNGHIVPALLAGNTLIFKPSELTPWTGETVIKLWERAGLPAGVLNLVQGGRETGQALSSLDDLDGLLFTGSASTGYQLHRQLSGQPEKILALEMGGNNPLIIEDVANIDAAVHLTLQSAFITAGQRCTCARRLLVKQGAQGDAFLARLVDVAGRLQPGRWDDDPQPFIGGLISAQAAQHVMEAWRQREALGGRTLLAPRKVKEGTSLLTPGIIELTGVADVPDEEVFGPLLNVWRYAHFDEAIRLANNTRFGLSCGLVSTDRAQFEQLLLEARAGIVNWNKPLTGAASTAPFGGVGASGNHRPSAWYAADYCAWPMVSLESPELTLPATLSPGLDFSRREAV.

NAD(+) is bound at residue 220-225; sequence GSASTG. Catalysis depends on residues Glu-243 and Cys-277.

Belongs to the aldehyde dehydrogenase family. AstD subfamily.

The catalysed reaction is N-succinyl-L-glutamate 5-semialdehyde + NAD(+) + H2O = N-succinyl-L-glutamate + NADH + 2 H(+). It participates in amino-acid degradation; L-arginine degradation via AST pathway; L-glutamate and succinate from L-arginine: step 4/5. Its function is as follows. Catalyzes the NAD-dependent reduction of succinylglutamate semialdehyde into succinylglutamate. This is N-succinylglutamate 5-semialdehyde dehydrogenase from Salmonella dublin (strain CT_02021853).